We begin with the raw amino-acid sequence, 294 residues long: Ribosomal RNA small subunit methyltransferase H (294 aa).

Residues 36-38 (GGH), D55, F82, D97, and Q104 each bind S-adenosyl-L-methionine. The segment at 265 to 285 (KPTVATDDEQNRNPRSRSAKW) is disordered.

The protein belongs to the methyltransferase superfamily. RsmH family.

It is found in the cytoplasm. It carries out the reaction cytidine(1402) in 16S rRNA + S-adenosyl-L-methionine = N(4)-methylcytidine(1402) in 16S rRNA + S-adenosyl-L-homocysteine + H(+). In terms of biological role, specifically methylates the N4 position of cytidine in position 1402 (C1402) of 16S rRNA. This is Ribosomal RNA small subunit methyltransferase H from Synechococcus sp. (strain CC9902).